A 720-amino-acid chain; its full sequence is DNA replication licensing factor mcm7-B (720 aa).

The segment at 183-210 adopts a C4-type zinc-finger fold; the sequence is CDQCGAETYQPIQSPTFMPLIMCPSREC. Residues 331 to 537 form the MCM domain; it reads FYEKLAASIA…NDLRLAQHIT (207 aa). 8 residues coordinate ATP: Tyr-344, Gly-383, Ala-385, Lys-386, Ser-387, Asn-488, Arg-513, and Arg-603. The Arginine finger motif lies at 512–515; that stretch reads SRFD.

This sequence belongs to the MCM family. Component of the mcm2-7 complex (RLF-M). The complex forms a toroidal hexameric ring with the proposed subunit order mcm2-mcm6-mcm4-mcm7-mcm3-mcm5. The heterodimer of mmcm3/mcm5 interacts with mcm4, mmcm6, mcm7 and weakly with mcm2. The N-terminus is required for interaction with mmcm3, though this interaction may not be direct, and remains in a complex with mmcm3 throughout the cell cycle. Begins to associate with zmcm6 at the neurula stage. Component of the replisome complex. Component of the CMG helicase complex, composed of the mcm2-7 complex, the GINS complex and cdc45. Post-translationally, ubiquitinated by traip when forks converge following formation of DNA interstrand cross-links. Short ubiquitin chains on mcm7 promote recruitment of DNA glycosylase neil3. If the interstrand cross-link cannot be cleaved by neil3, the ubiquitin chains continue to grow on mcm7, promoting the unloading of the CMG helicase complex by the vcp/p97 ATPase.

The protein resides in the nucleus. Its subcellular location is the chromosome. It carries out the reaction ATP + H2O = ADP + phosphate + H(+). In terms of biological role, acts as a component of the mcm2-7 complex (mcm complex) which is the putative replicative helicase essential for 'once per cell cycle' DNA replication initiation and elongation in eukaryotic cells. The active ATPase sites in the mcm2-7 ring are formed through the interaction surfaces of two neighboring subunits such that a critical structure of a conserved arginine finger motif is provided in trans relative to the ATP-binding site of the Walker A box of the adjacent subunit. The six ATPase active sites, however, are likely to contribute differentially to the complex helicase activity. The existence of maternal and zygotic forms of mcm3 and mcm6 suggests that specific forms of mcm2-7 complexes may be used during different stages of development. This chain is DNA replication licensing factor mcm7-B (mcm7-b), found in Xenopus laevis (African clawed frog).